Here is a 343-residue protein sequence, read N- to C-terminus: N-acetyl-gamma-glutamyl-phosphate reductase (343 aa).

Residue C147 is part of the active site.

It belongs to the NAGSA dehydrogenase family. Type 1 subfamily.

It is found in the cytoplasm. The catalysed reaction is N-acetyl-L-glutamate 5-semialdehyde + phosphate + NADP(+) = N-acetyl-L-glutamyl 5-phosphate + NADPH + H(+). It functions in the pathway amino-acid biosynthesis; L-arginine biosynthesis; N(2)-acetyl-L-ornithine from L-glutamate: step 3/4. In terms of biological role, catalyzes the NADPH-dependent reduction of N-acetyl-5-glutamyl phosphate to yield N-acetyl-L-glutamate 5-semialdehyde. The polypeptide is N-acetyl-gamma-glutamyl-phosphate reductase (Listeria welshimeri serovar 6b (strain ATCC 35897 / DSM 20650 / CCUG 15529 / CIP 8149 / NCTC 11857 / SLCC 5334 / V8)).